Consider the following 460-residue polypeptide: tRNA modification GTPase MnmE (460 aa).

(6S)-5-formyl-5,6,7,8-tetrahydrofolate contacts are provided by Arg24, Glu81, and Lys121. The region spanning 218–385 (GMVVAIAGPP…LIAAIEDFAA (168 aa)) is the TrmE-type G domain. GTP is bound by residues 228-233 (NVGKST), 247-253 (SPHAGTT), and 272-275 (DTAG). 2 residues coordinate Mg(2+): Ser232 and Thr253. Lys460 contributes to the (6S)-5-formyl-5,6,7,8-tetrahydrofolate binding site.

The protein belongs to the TRAFAC class TrmE-Era-EngA-EngB-Septin-like GTPase superfamily. TrmE GTPase family. Homodimer. Heterotetramer of two MnmE and two MnmG subunits. K(+) is required as a cofactor.

The protein localises to the cytoplasm. Its function is as follows. Exhibits a very high intrinsic GTPase hydrolysis rate. Involved in the addition of a carboxymethylaminomethyl (cmnm) group at the wobble position (U34) of certain tRNAs, forming tRNA-cmnm(5)s(2)U34. This chain is tRNA modification GTPase MnmE, found in Rhodopseudomonas palustris (strain BisB5).